The primary structure comprises 318 residues: Pantothenate kinase (318 aa).

Residue 96–103 (GSVSVGKS) participates in ATP binding.

The protein belongs to the prokaryotic pantothenate kinase family.

It is found in the cytoplasm. The enzyme catalyses (R)-pantothenate + ATP = (R)-4'-phosphopantothenate + ADP + H(+). It functions in the pathway cofactor biosynthesis; coenzyme A biosynthesis; CoA from (R)-pantothenate: step 1/5. This Bradyrhizobium sp. (strain ORS 278) protein is Pantothenate kinase.